A 322-amino-acid polypeptide reads, in one-letter code: tRNA dimethylallyltransferase (322 aa).

19–26 provides a ligand contact to ATP; sequence GPTASGKT. 21–26 provides a ligand contact to substrate; it reads TASGKT. Interaction with substrate tRNA regions lie at residues 44–47, 168–172, and 255–260; these read DSAL, QRIQR, and RCVGYR.

The protein belongs to the IPP transferase family. Monomer. It depends on Mg(2+) as a cofactor.

The catalysed reaction is adenosine(37) in tRNA + dimethylallyl diphosphate = N(6)-dimethylallyladenosine(37) in tRNA + diphosphate. Its function is as follows. Catalyzes the transfer of a dimethylallyl group onto the adenine at position 37 in tRNAs that read codons beginning with uridine, leading to the formation of N6-(dimethylallyl)adenosine (i(6)A). This Cupriavidus necator (strain ATCC 17699 / DSM 428 / KCTC 22496 / NCIMB 10442 / H16 / Stanier 337) (Ralstonia eutropha) protein is tRNA dimethylallyltransferase.